We begin with the raw amino-acid sequence, 569 residues long: 4-hydroxy-7-methoxy-3-oxo-3,4-dihydro-2H-1,4-benzoxazin-2-yl glucoside beta-D-glucosidase 1a, chloroplastic (569 aa).

The transit peptide at 1–50 directs the protein to the chloroplast; it reads MALLAAATLNPTTHLSLRSRAGRNSENLWLRSAASSQKSKGRFCNLTIRA. A beta-D-glucoside contacts are provided by residues Gln-92, His-194, and 239 to 240; that span reads NE. The active-site Proton donor is the Glu-240. Cys-259 and Cys-265 are oxidised to a cystine. Residues Tyr-383, Glu-456, Trp-504, 511–512, and Phe-520 each bind a beta-D-glucoside; that span reads EW. Glu-456 (nucleophile) is an active-site residue.

This sequence belongs to the glycosyl hydrolase 1 family. Homo- and heterohexamers. As to expression, expressed in young seedlings early after germination.

The protein resides in the plastid. It localises to the chloroplast. The enzyme catalyses Hydrolysis of terminal, non-reducing beta-D-glucosyl residues with release of beta-D-glucose.. It carries out the reaction DIMBOA beta-D-glucoside + H2O = DIMBOA + D-glucose. The catalysed reaction is DIBOA beta-D-glucoside + H2O = DIBOA + D-glucose. Functionally, acts in defense of young plant parts against pests via the production of hydroxamic acids from hydroxamic acid glucosides. Enzymatic activity is highly correlated with plant growth. The preferred substrate is DIMBOA-beta-D-glucoside. This chain is 4-hydroxy-7-methoxy-3-oxo-3,4-dihydro-2H-1,4-benzoxazin-2-yl glucoside beta-D-glucosidase 1a, chloroplastic (GLU1A), found in Triticum aestivum (Wheat).